The sequence spans 306 residues: UDP-N-acetylenolpyruvoylglucosamine reductase (306 aa).

Residues valine 34–serine 198 enclose the FAD-binding PCMH-type domain. Arginine 177 is an active-site residue. Catalysis depends on serine 227, which acts as the Proton donor. Residue glutamate 297 is part of the active site.

This sequence belongs to the MurB family. FAD is required as a cofactor.

It is found in the cytoplasm. The enzyme catalyses UDP-N-acetyl-alpha-D-muramate + NADP(+) = UDP-N-acetyl-3-O-(1-carboxyvinyl)-alpha-D-glucosamine + NADPH + H(+). The protein operates within cell wall biogenesis; peptidoglycan biosynthesis. Cell wall formation. The sequence is that of UDP-N-acetylenolpyruvoylglucosamine reductase from Clostridium botulinum (strain Okra / Type B1).